Here is a 322-residue protein sequence, read N- to C-terminus: Autophagy protein 5 (322 aa).

K158 participates in a covalent cross-link: Glycyl lysine isopeptide (Lys-Gly) (interchain with G-Cter in atg12).

Belongs to the ATG5 family. Conjugated with atg12. In terms of processing, conjugated to atg12; which is essential for autophagy.

Its subcellular location is the preautophagosomal structure membrane. In terms of biological role, involved in cytoplasm to vacuole transport (Cvt) and autophagic vesicle formation. Autophagy is essential for maintenance of amino acid levels and protein synthesis under nitrogen starvation. Required for selective autophagic degradation of the nucleus (nucleophagy). Also required for mitophagy, which eliminates defective or superfluous mitochondria in order to fulfill cellular energy requirements and prevent excess ROS production. Conjugation with atg12, through a ubiquitin-like conjugating system involving atg7 as an E1-like activating enzyme and atg10 as an E2-like conjugating enzyme, is essential for its function. The atg12-atg5 conjugate acts as an E3-like enzyme which is required for lipidation of atg8 and atg8 association to the vesicle membranes. The chain is Autophagy protein 5 (atg5) from Aspergillus oryzae (strain ATCC 42149 / RIB 40) (Yellow koji mold).